The chain runs to 441 residues: Velvet complex subunit B (441 aa).

Residues 1–173 form the Velvet domain; it reads MSTLGQGDFE…SDQGVRLRLR (173 aa). Disordered stretches follow at residues 200–220, 234–295, and 341–396; these read GYLP…PHHL, RSRS…ETDT, and MPSP…PSYA. Low complexity-rich tracts occupy residues 272 to 283 and 361 to 375; these read DGASPDSPHPSS and PAGA…FSPG.

Belongs to the velvet family. VelB subfamily. As to quaternary structure, component of the heterotrimeric velvet complex composed of laeA, veA and velB; VeA acting as a bridging protein between laeA and velB.

The protein resides in the nucleus. It localises to the cytoplasm. In terms of biological role, component of the velvet transcription factor complex that controls sexual/asexual developmental ratio in response to light, promoting sexual development in the darkness while stimulating asexual sporulation under illumination. The velvet complex acts as a global regulator for secondary metabolite gene expression and is required for the production of chaetoglobosin A. This is Velvet complex subunit B from Chaetomium globosum (strain ATCC 6205 / CBS 148.51 / DSM 1962 / NBRC 6347 / NRRL 1970) (Soil fungus).